We begin with the raw amino-acid sequence, 504 residues long: ATP synthase subunit alpha (504 aa).

Position 169–176 (169–176 (GDRKTGKT)) interacts with ATP.

It belongs to the ATPase alpha/beta chains family. F-type ATPases have 2 components, CF(1) - the catalytic core - and CF(0) - the membrane proton channel. CF(1) has five subunits: alpha(3), beta(3), gamma(1), delta(1), epsilon(1). CF(0) has three main subunits: a(1), b(2) and c(9-12). The alpha and beta chains form an alternating ring which encloses part of the gamma chain. CF(1) is attached to CF(0) by a central stalk formed by the gamma and epsilon chains, while a peripheral stalk is formed by the delta and b chains.

It is found in the cell membrane. The enzyme catalyses ATP + H2O + 4 H(+)(in) = ADP + phosphate + 5 H(+)(out). Its function is as follows. Produces ATP from ADP in the presence of a proton gradient across the membrane. The alpha chain is a regulatory subunit. This Lactiplantibacillus plantarum (strain ATCC BAA-793 / NCIMB 8826 / WCFS1) (Lactobacillus plantarum) protein is ATP synthase subunit alpha.